The sequence spans 208 residues: Imidazole glycerol phosphate synthase subunit HisH (208 aa).

The Glutamine amidotransferase type-1 domain maps to Met-1–Ser-206. Cys-79 acts as the Nucleophile in catalysis. Catalysis depends on residues His-181 and Glu-183.

As to quaternary structure, heterodimer of HisH and HisF.

The protein resides in the cytoplasm. It catalyses the reaction 5-[(5-phospho-1-deoxy-D-ribulos-1-ylimino)methylamino]-1-(5-phospho-beta-D-ribosyl)imidazole-4-carboxamide + L-glutamine = D-erythro-1-(imidazol-4-yl)glycerol 3-phosphate + 5-amino-1-(5-phospho-beta-D-ribosyl)imidazole-4-carboxamide + L-glutamate + H(+). The enzyme catalyses L-glutamine + H2O = L-glutamate + NH4(+). It participates in amino-acid biosynthesis; L-histidine biosynthesis; L-histidine from 5-phospho-alpha-D-ribose 1-diphosphate: step 5/9. IGPS catalyzes the conversion of PRFAR and glutamine to IGP, AICAR and glutamate. The HisH subunit catalyzes the hydrolysis of glutamine to glutamate and ammonia as part of the synthesis of IGP and AICAR. The resulting ammonia molecule is channeled to the active site of HisF. The sequence is that of Imidazole glycerol phosphate synthase subunit HisH from Listeria monocytogenes serotype 4a (strain HCC23).